We begin with the raw amino-acid sequence, 406 residues long: Glucose-6-phosphate isomerase (406 aa).

The active-site Proton donor is the Glu259. Active-site residues include His284 and Lys397.

This sequence belongs to the GPI family.

The protein resides in the cytoplasm. It catalyses the reaction alpha-D-glucose 6-phosphate = beta-D-fructose 6-phosphate. It participates in carbohydrate biosynthesis; gluconeogenesis. Its pathway is carbohydrate degradation; glycolysis; D-glyceraldehyde 3-phosphate and glycerone phosphate from D-glucose: step 2/4. Its function is as follows. Catalyzes the reversible isomerization of glucose-6-phosphate to fructose-6-phosphate. This Campylobacter jejuni subsp. jejuni serotype O:2 (strain ATCC 700819 / NCTC 11168) protein is Glucose-6-phosphate isomerase.